The primary structure comprises 106 residues: L-rhamnose mutarotase (106 aa).

Tyrosine 20 is a binding site for substrate. Catalysis depends on histidine 24, which acts as the Proton donor. Residues tyrosine 43 and 78–79 (WW) contribute to the substrate site.

Belongs to the rhamnose mutarotase family. Homodimer.

Its subcellular location is the cytoplasm. The catalysed reaction is alpha-L-rhamnose = beta-L-rhamnose. Its pathway is carbohydrate metabolism; L-rhamnose metabolism. In terms of biological role, involved in the anomeric conversion of L-rhamnose. The sequence is that of L-rhamnose mutarotase from Verminephrobacter eiseniae (strain EF01-2).